We begin with the raw amino-acid sequence, 542 residues long: DM7 family protein CG15333 (542 aa).

The protein belongs to the DM7 family.

This chain is DM7 family protein CG15333, found in Drosophila melanogaster (Fruit fly).